Consider the following 253-residue polypeptide: Indole-3-glycerol phosphate synthase (253 aa).

Belongs to the TrpC family.

The enzyme catalyses 1-(2-carboxyphenylamino)-1-deoxy-D-ribulose 5-phosphate + H(+) = (1S,2R)-1-C-(indol-3-yl)glycerol 3-phosphate + CO2 + H2O. It functions in the pathway amino-acid biosynthesis; L-tryptophan biosynthesis; L-tryptophan from chorismate: step 4/5. The sequence is that of Indole-3-glycerol phosphate synthase from Bacillus cereus (strain AH187).